The following is a 453-amino-acid chain: DNA repair protein RadA (453 aa).

A C4-type zinc finger spans residues 10–27; the sequence is CQECGYQSPKYLGRCPNC. 95–102 is a binding site for ATP; that stretch reads GDPGIGKS. A RadA KNRFG motif motif is present at residues 251 to 255; the sequence is KNRFG. The tract at residues 350 to 453 is lon-protease-like; the sequence is DAYLKSAGGV…VGQVLNAVFS (104 aa).

Belongs to the RecA family. RadA subfamily.

Its function is as follows. DNA-dependent ATPase involved in processing of recombination intermediates, plays a role in repairing DNA breaks. Stimulates the branch migration of RecA-mediated strand transfer reactions, allowing the 3' invading strand to extend heteroduplex DNA faster. Binds ssDNA in the presence of ADP but not other nucleotides, has ATPase activity that is stimulated by ssDNA and various branched DNA structures, but inhibited by SSB. Does not have RecA's homology-searching function. In Streptococcus pyogenes serotype M1, this protein is DNA repair protein RadA.